Consider the following 381-residue polypeptide: Probable tRNA sulfurtransferase (381 aa).

The 104-residue stretch at 57-160 folds into the THUMP domain; that stretch reads EKGIEKLKSV…NKAYVYSKKI (104 aa). ATP contacts are provided by residues 177–178, 202–203, Arg-259, Gly-281, and Gln-290; these read ML and YF.

Belongs to the ThiI family.

It localises to the cytoplasm. The enzyme catalyses [ThiI sulfur-carrier protein]-S-sulfanyl-L-cysteine + a uridine in tRNA + 2 reduced [2Fe-2S]-[ferredoxin] + ATP + H(+) = [ThiI sulfur-carrier protein]-L-cysteine + a 4-thiouridine in tRNA + 2 oxidized [2Fe-2S]-[ferredoxin] + AMP + diphosphate. It catalyses the reaction [ThiS sulfur-carrier protein]-C-terminal Gly-Gly-AMP + S-sulfanyl-L-cysteinyl-[cysteine desulfurase] + AH2 = [ThiS sulfur-carrier protein]-C-terminal-Gly-aminoethanethioate + L-cysteinyl-[cysteine desulfurase] + A + AMP + 2 H(+). Its pathway is cofactor biosynthesis; thiamine diphosphate biosynthesis. Functionally, catalyzes the ATP-dependent transfer of a sulfur to tRNA to produce 4-thiouridine in position 8 of tRNAs, which functions as a near-UV photosensor. Also catalyzes the transfer of sulfur to the sulfur carrier protein ThiS, forming ThiS-thiocarboxylate. This is a step in the synthesis of thiazole, in the thiamine biosynthesis pathway. The sulfur is donated as persulfide by IscS. The chain is Probable tRNA sulfurtransferase from Clostridium kluyveri (strain NBRC 12016).